Here is a 198-residue protein sequence, read N- to C-terminus: Clytin (198 aa).

The propeptide occupies 1 to 9 (MADTASKYA). EF-hand domains follow at residues 20-55 (KWVN…DICA), 60-95 (TPEQ…VDGW), 119-148 (EAVF…SGIC), and 149-184 (SSDE…FWYT). Aspartate 33, asparagine 35, aspartate 37, lysine 39, and glutamate 44 together coordinate Ca(2+). The Ca(2+) site is built by aspartate 126, aspartate 128, serine 130, serine 132, glutamate 137, aspartate 162, aspartate 164, serine 166, lysine 168, and glutamate 173.

Belongs to the aequorin family.

Its function is as follows. Ca(2+)-dependent bioluminescence photoprotein. Displays an emission peak at 470 nm (blue light). Trace amounts of calcium ion trigger the intramolecular oxidation of the chromophore, coelenterazine into coelenteramide and CO(2) with the concomitant emission of light. In Clytia gregaria (Gregarious jellyfish), this protein is Clytin.